A 509-amino-acid chain; its full sequence is Maturase K (509 aa).

It belongs to the intron maturase 2 family. MatK subfamily.

The protein resides in the plastid. The protein localises to the chloroplast. Functionally, usually encoded in the trnK tRNA gene intron. Probably assists in splicing its own and other chloroplast group II introns. This Drimys granadensis protein is Maturase K.